Here is a 609-residue protein sequence, read N- to C-terminus: Glutamine--fructose-6-phosphate aminotransferase [isomerizing] (609 aa).

The Nucleophile; for GATase activity role is filled by Cys2. Positions 2–219 constitute a Glutamine amidotransferase type-2 domain; the sequence is CGIFGYLGSK…SGELAIVGLG (218 aa). SIS domains lie at 280–426 and 458–599; these read ISEK…SKHT and WAHT…IDCP. The For Fru-6P isomerization activity role is filled by Lys604.

Homodimer.

The protein localises to the cytoplasm. The catalysed reaction is D-fructose 6-phosphate + L-glutamine = D-glucosamine 6-phosphate + L-glutamate. In terms of biological role, catalyzes the first step in hexosamine metabolism, converting fructose-6P into glucosamine-6P using glutamine as a nitrogen source. This chain is Glutamine--fructose-6-phosphate aminotransferase [isomerizing], found in Chlamydia abortus (strain DSM 27085 / S26/3) (Chlamydophila abortus).